Reading from the N-terminus, the 541-residue chain is MINKFLTIFLIFSIVIIKVLSQSSNEQPLNVVPYPQEVTMIGCNIPLSVGSISIKSNIESTILSISISRYQSLFFPFVSNNVLKDSSSNIELSLIIASDDETLELGIDESYFLLVNQDTYQIKANTIYGAMRGLETFKQMVVYDVVENSYSLTCAEVVDYPTYQWRGLLVDNARHFLPKNMVLHIIDSMGYNKFNTMHWHLIDTVAFPVESKTYPKLTEALLGPGAIITHDDILEVVAYAKTYGIRVIPEFDVPGHSASWGVGYPELLSNCPGYPQSSIPLDCSNPYTYSFLENFFSEIAPLFQDSYFHTGGDELVIDCWANDTSIQKWMKTNNYNTSDAFQYFEDQLDVILKSINRTKIAWNDVLQHGVKFDKETTLVQTWTNINDLRDVLAAGYKTITSFFFYLDRQSPTGNHYHYEWQDTWEDFYASDPRLNITSNAENILGGEATMFGEQVSTVNWDARVWPRAIGISERLWSATEINNITLALPRIGQFSCDMSRRGISSGPLFPDFCSLPDDLSFSFKPVYQLSKDEIKLILKKK.

Residues 1 to 21 form the signal peptide; that stretch reads MINKFLTIFLIFSIVIIKVLS. Catalysis depends on Glu314, which acts as the Proton donor. Asn322, Asn336, Asn356, Asn435, and Asn483 each carry an N-linked (GlcNAc...) asparagine glycan.

Belongs to the glycosyl hydrolase 20 family.

The protein localises to the lysosome. The enzyme catalyses Hydrolysis of terminal non-reducing N-acetyl-D-hexosamine residues in N-acetyl-beta-D-hexosaminides.. In terms of biological role, responsible for the degradation of GM2 gangliosides, and a variety of other molecules containing terminal N-acetyl hexosamines. The chain is Beta-hexosaminidase subunit A2 (hexa2) from Dictyostelium discoideum (Social amoeba).